Consider the following 793-residue polypeptide: Protein smoothened (793 aa).

The first 32 residues, 1–32 (MAAGRPVRGPELAPRRLLQLLLLVLLGGPGRG), serve as a signal peptide directing secretion. The Extracellular segment spans residues 33 to 237 (AALSGNVTGP…EAEHQDMHSY (205 aa)). The interval 35 to 61 (LSGNVTGPGPHSASGSSRRDVPVTSPP) is disordered. N-linked (GlcNAc...) asparagine glycosylation occurs at Asn38. Intrachain disulfides connect Cys68–Cys182, Cys74–Cys138, Cys82–Cys131, Cys122–Cys158, and Cys151–Cys173. One can recognise an FZ domain in the interval 69 to 185 (GRAAHCEPLR…DHFPEGCPNE (117 aa)). Residue Asp99 participates in cholesterol binding. N-linked (GlcNAc...) asparagine glycosylation is present at Asn192. 3 disulfides stabilise this stretch: Cys197–Cys217, Cys221–Cys299, and Cys318–Cys394. Residues 238–258 (IAAFGAVTGLCTLFTLATFVA) traverse the membrane as a helical segment. The Cytoplasmic portion of the chain corresponds to 259–265 (DWRNSNR). Residues 266 to 286 (YPAVILFYVNACFFVGSIGWL) traverse the membrane as a helical segment. Over 287-318 (AQFMDGARREIVCRADGTMRFGEPTSSETLSC) the chain is Extracellular. A helical transmembrane segment spans residues 319-339 (VIIFVIVYYALMAGVVWFVVL). The Cytoplasmic segment spans residues 340–362 (TYAWHTSFKALGTTYQPLSGKTS). A helical transmembrane segment spans residues 363–383 (YFHLLTWSLPFVLTVAILAVA). The Extracellular portion of the chain corresponds to 384–406 (QVDGDSVSGICFVGYKNYRYRAG). Residue Tyr398 coordinates cholesterol. The helical transmembrane segment at 407–427 (FVLAPIGLVLIVGGYFLIRGV) threads the bilayer. Residues 428 to 455 (MTLFSIKSNHPGLLSEKAASKINETMLR) lie on the Cytoplasmic side of the membrane. A helical transmembrane segment spans residues 456 to 476 (LGIFGFLAFGFVLITFSCHFY). The Extracellular segment spans residues 477 to 528 (DFFNQAEWERSFRDYVLCQANVTIGLPTKKPIPDCEIKNRPSLLVEKINLFA). Cysteines 494 and 511 form a disulfide. An N-linked (GlcNAc...) asparagine glycan is attached at Asn497. A helical transmembrane segment spans residues 529-549 (MFGTGIAMSTWVWTKATLLIW). The interval 542 to 573 (TKATLLIWRRTWCRLTGHSDDEPKRIKKSKMI) is interaction with BBS5 and BBS7. Residues 550–793 (RRTWCRLTGH…AEILDADSDF (244 aa)) are Cytoplasmic-facing. A phosphoserine mark is found at Ser560, Ser578, and Ser594. Residues 574–657 (AKAFSKRREL…TPVPPEEQAN (84 aa)) are required for interaction with PRKACA. The tract at residues 585-597 (QNPGQELSFSMHT) is interaction with DLG5. Thr597 bears the Phosphothreonine mark. A phosphoserine mark is found at Ser599 and Ser642. A phosphothreonine mark is found at Thr644 and Thr648. Ser666 is subject to Phosphoserine. Residues 674–684 (GRKKKRRKRKK) show a composition bias toward basic residues. Residues 674-703 (GRKKKRRKRKKEVCPLRPAPELHHSAPVPA) are disordered.

This sequence belongs to the G-protein coupled receptor Fz/Smo family. Homodimer. Interacts (via C-terminus) with protein kinase A catalytic subunit PRKACA; interacts with free PRKACA subunits and the interaction leads to sequestration of PRKACA at the membrane, preventing PRKACA-mediated phosphorylation of GLI transcription factors. Interacts with ARRB2. Interacts with BBS5 and BBS7; the interactions are indicative for the association of SMO with the BBsome complex to facilitate ciliary localization of SMO. Interacts with KIF7, DLG5 and SDCBP. Interacts with GAS8/DRC4. Post-translationally, phosphorylation by GRK kinases is required for interaction with protein kinase A catalytic subunit PRKACA. As to expression, during early somite stages of embryonic development, modestly up-regulated in the cells of the node (at protein level).

It localises to the cell membrane. It is found in the cell projection. Its subcellular location is the cilium. G protein-coupled receptor which associates with the patched protein (PTCH) to transduce hedgehog protein signaling. Binding of sonic hedgehog (SHH) to its receptor patched prevents inhibition of smoothened (SMO) by patched. When active, SMO binds to and sequesters protein kinase A catalytic subunit PRKACA at the cell membrane, preventing PRKACA-mediated phosphorylation of GLI transcription factors which releases the GLI proteins from PRKACA-mediated inhibition and allows for transcriptional activation of hedgehog pathway target genes. Required for the accumulation of KIF7, GLI2 and GLI3 in the cilia. Interacts with DLG5 at the ciliary base to induce the accumulation of KIF7 and GLI2 at the ciliary tip for GLI2 activation. The polypeptide is Protein smoothened (Smo) (Mus musculus (Mouse)).